We begin with the raw amino-acid sequence, 362 residues long: Cytochrome c oxidase subunit 2 (362 aa).

The signal sequence occupies residues 1–28 (MEQQEKRGTVRKALLGSVIGFGGLALAG). Cysteine 29 is lipidated: N-palmitoyl cysteine. The S-diacylglycerol cysteine moiety is linked to residue cysteine 29. Transmembrane regions (helical) follow at residues 60-80 (FWVW…GLFI) and 107-127 (IPLE…LFFF). A disordered region spans residues 171–206 (SDYVGTDEKRQEAAEKTKFDQGGDNPNPINGRSKTD). Residues 176–191 (TDEKRQEAAEKTKFDQ) show a composition bias toward basic and acidic residues. The segment covering 197-206 (NPINGRSKTD) has biased composition (polar residues). The Cu cation site is built by histidine 246, cysteine 287, glutamate 289, cysteine 291, histidine 295, and methionine 298. The tract at residues 325–362 (NSDALKSIGEAPYATSTHPFNSERATRDGANFDDTAAA) is disordered.

The protein belongs to the cytochrome c oxidase subunit 2 family. Associates with subunits I, III and IV to form cytochrome c oxidase. Binuclear copper center (CuA) is required as a cofactor.

It is found in the cell membrane. The enzyme catalyses 4 Fe(II)-[cytochrome c] + O2 + 8 H(+)(in) = 4 Fe(III)-[cytochrome c] + 2 H2O + 4 H(+)(out). Its function is as follows. Subunits I and II form the functional core of the enzyme complex. Electrons originating in cytochrome c are transferred via heme a and Cu(A) to the binuclear center formed by heme a3 and Cu(B). The protein is Cytochrome c oxidase subunit 2 (ctaC) of Corynebacterium diphtheriae (strain ATCC 700971 / NCTC 13129 / Biotype gravis).